The sequence spans 61 residues: MMIKRHLPQPRHRERPGALCGSGVPAPAARHPTAVPGGQDQFGSATHHGSDGQTHTGPQIR.

A compositionally biased stretch (basic residues) spans 1–14 (MMIKRHLPQPRHRE). The tract at residues 1-61 (MMIKRHLPQP…GQTHTGPQIR (61 aa)) is disordered. Positions 51 to 61 (DGQTHTGPQIR) are enriched in polar residues.

Functionally, regulation of the expression of aerolysin. The protein is Aerolysin regulatory protein (aerC) of Aeromonas sobria.